A 292-amino-acid chain; its full sequence is 1,4-dihydroxy-2-naphthoate octaprenyltransferase (292 aa).

The next 6 membrane-spanning stretches (helical) occupy residues Ala-35–Val-55, Ala-101–Ile-121, Gly-137–Gly-157, Val-166–Val-186, Leu-220–Val-240, and Thr-271–Leu-291.

This sequence belongs to the MenA family. Type 1 subfamily. It depends on Mg(2+) as a cofactor.

It localises to the cell membrane. The catalysed reaction is an all-trans-polyprenyl diphosphate + 1,4-dihydroxy-2-naphthoate + H(+) = a 2-demethylmenaquinol + CO2 + diphosphate. It functions in the pathway quinol/quinone metabolism; menaquinone biosynthesis; menaquinol from 1,4-dihydroxy-2-naphthoate: step 1/2. With respect to regulation, activity is abolished by EDTA. Inhibited by Ro 48-8071, which is non-competitive with regard to DHNA and competitive with regard to the isoprenyldiphosphate substrate. Functionally, conversion of 1,4-dihydroxy-2-naphthoate (DHNA) to demethylmenaquinone (DMK). Can use a variety of allylic isoprenyl diphosphates as substrates but has a requirement for at least three isoprene units. The protein is 1,4-dihydroxy-2-naphthoate octaprenyltransferase of Mycobacterium tuberculosis (strain ATCC 25618 / H37Rv).